The following is a 343-amino-acid chain: Heat-inducible transcription repressor HrcA (343 aa).

Belongs to the HrcA family.

Its function is as follows. Negative regulator of class I heat shock genes (grpE-dnaK-dnaJ and groELS operons). Prevents heat-shock induction of these operons. This chain is Heat-inducible transcription repressor HrcA, found in Mycobacterium marinum (strain ATCC BAA-535 / M).